Reading from the N-terminus, the 477-residue chain is Bifunctional protein HldE (477 aa).

The interval 1-318 (MKVNLPAFER…ENAVRGRADT (318 aa)) is ribokinase. 195 to 198 (NLSE) lines the ATP pocket. Asp264 is a catalytic residue. The tract at residues 344–477 (MTNGVFDILH…IKKIQTESEK (134 aa)) is cytidylyltransferase.

This sequence in the N-terminal section; belongs to the carbohydrate kinase PfkB family. The protein in the C-terminal section; belongs to the cytidylyltransferase family. Homodimer.

It catalyses the reaction D-glycero-beta-D-manno-heptose 7-phosphate + ATP = D-glycero-beta-D-manno-heptose 1,7-bisphosphate + ADP + H(+). It carries out the reaction D-glycero-beta-D-manno-heptose 1-phosphate + ATP + H(+) = ADP-D-glycero-beta-D-manno-heptose + diphosphate. Its pathway is nucleotide-sugar biosynthesis; ADP-L-glycero-beta-D-manno-heptose biosynthesis; ADP-L-glycero-beta-D-manno-heptose from D-glycero-beta-D-manno-heptose 7-phosphate: step 1/4. The protein operates within nucleotide-sugar biosynthesis; ADP-L-glycero-beta-D-manno-heptose biosynthesis; ADP-L-glycero-beta-D-manno-heptose from D-glycero-beta-D-manno-heptose 7-phosphate: step 3/4. Functionally, catalyzes the phosphorylation of D-glycero-D-manno-heptose 7-phosphate at the C-1 position to selectively form D-glycero-beta-D-manno-heptose-1,7-bisphosphate. Its function is as follows. Catalyzes the ADP transfer from ATP to D-glycero-beta-D-manno-heptose 1-phosphate, yielding ADP-D-glycero-beta-D-manno-heptose. This chain is Bifunctional protein HldE, found in Salmonella paratyphi A (strain ATCC 9150 / SARB42).